A 144-amino-acid polypeptide reads, in one-letter code: MTEQKQVKKPSARRRARECTVQALYSWAVSGNTAEQVELAFVLDQDMDGVDKPYFRKLFRQTIENIETVDFSISPYIDRTFDELDPIETAILRLAVYELRFELDVPYKVVINEAIEVAKVFGADESHKYINGVLDKIAPALGRK.

This sequence belongs to the NusB family.

In terms of biological role, involved in transcription antitermination. Required for transcription of ribosomal RNA (rRNA) genes. Binds specifically to the boxA antiterminator sequence of the ribosomal RNA (rrn) operons. This Haemophilus influenzae (strain PittEE) protein is Transcription antitermination protein NusB.